A 217-amino-acid chain; its full sequence is Large ribosomal subunit protein bL25 (217 aa).

Residues 187-217 (STPSGLEVEEETGEEESAEPEVIEKGKKEEE) form a disordered region. Over residues 193–207 (EVEEETGEEESAEPE) the composition is skewed to acidic residues. A compositionally biased stretch (basic and acidic residues) spans 208–217 (VIEKGKKEEE).

This sequence belongs to the bacterial ribosomal protein bL25 family. CTC subfamily. As to quaternary structure, part of the 50S ribosomal subunit; part of the 5S rRNA/L5/L18/L25 subcomplex. Contacts the 5S rRNA. Binds to the 5S rRNA independently of L5 and L18.

This is one of the proteins that binds to the 5S RNA in the ribosome where it forms part of the central protuberance. The polypeptide is Large ribosomal subunit protein bL25 (Thermosipho africanus (strain TCF52B)).